The sequence spans 282 residues: Pantothenate synthetase (282 aa).

30-37 is an ATP binding site; it reads MGYLHEGH. Histidine 37 (proton donor) is an active-site residue. Glutamine 61 contributes to the (R)-pantoate binding site. Glutamine 61 serves as a coordination point for beta-alanine. 147–150 contacts ATP; sequence GQKD. Glutamine 153 is a (R)-pantoate binding site. ATP is bound by residues valine 176 and 184–187; that span reads MSSR.

Belongs to the pantothenate synthetase family. Homodimer.

The protein resides in the cytoplasm. It catalyses the reaction (R)-pantoate + beta-alanine + ATP = (R)-pantothenate + AMP + diphosphate + H(+). It participates in cofactor biosynthesis; (R)-pantothenate biosynthesis; (R)-pantothenate from (R)-pantoate and beta-alanine: step 1/1. Functionally, catalyzes the condensation of pantoate with beta-alanine in an ATP-dependent reaction via a pantoyl-adenylate intermediate. The polypeptide is Pantothenate synthetase (Caldicellulosiruptor bescii (strain ATCC BAA-1888 / DSM 6725 / KCTC 15123 / Z-1320) (Anaerocellum thermophilum)).